Consider the following 1226-residue polypeptide: Polyamine-transporting ATPase 13A3 (1226 aa).

Topologically, residues 1–28 (MDREERKTINQGQEDEMEIYGYNLSRWK) are cytoplasmic. The stretch at 29–49 (LAIVSLGVICSGGFLLLLLYW) is an intramembrane region. The Cytoplasmic segment spans residues 50–205 (MPEWRVKATC…IAVKVPSVFK (156 aa)). Residue Ser-98 is modified to Phosphoserine. The chain crosses the membrane as a helical span at residues 206-226 (LLIKEVLNPFYIFQLFSVILW). Over 227-232 (STDEYY) the chain is Lumenal. A helical transmembrane segment spans residues 233–253 (YYALAIVVMSIVSIVSSLYSI). The Cytoplasmic segment spans residues 254-409 (RKQYVMLHDM…KPTDFKLYRD (156 aa)). A helical membrane pass occupies residues 410–430 (AYLFLLCLVAVAGIGFIYTII). The Lumenal portion of the chain corresponds to 431-448 (NSILNEVQVGVIIIESLD). Residues 449 to 469 (IITITVPPALPAAMTAGIVYA) traverse the membrane as a helical segment. Residues 470 to 940 (QRRLKKIGIF…ALITSFCVFK (471 aa)) are Cytoplasmic-facing. Residue Asp-498 is the 4-aspartylphosphate intermediate of the active site. Mg(2+)-binding residues include Asp-498 and Thr-500. ATP is bound by residues 498–500 (DKT), Phe-628, Arg-684, and Asp-750. Ser-817 carries the phosphoserine modification. Residues Asp-883 and Asp-887 each coordinate Mg(2+). 883 to 887 (DGAND) provides a ligand contact to ATP. The helical transmembrane segment at 941 to 961 (FMALYSIIQYFSVTLLYSILS) threads the bilayer. Position 962 (Asn-962) is a topological domain, lumenal. A helical transmembrane segment spans residues 963 to 983 (LGDFQFLFIDLAIILVVVFTM). Residues 984 to 999 (SLNPAWKELVAQRPPS) are Cytoplasmic-facing. The chain crosses the membrane as a helical span at residues 1000–1020 (GLISGALLFSVLSQIIICIGF). The Lumenal portion of the chain corresponds to 1021-1073 (QSLGFFWVKQQPWYEVWHPKSDACNTTGSGFWNSSHVDNETELDEHNIQNYEN). Residues 1074 to 1094 (TTVFFISSFQYLIVAIAFSKG) traverse the membrane as a helical segment. The Cytoplasmic portion of the chain corresponds to 1095-1105 (KPFRQPCYKNY). A helical membrane pass occupies residues 1106–1126 (FFVFSVIFLYIFILFIMLYPV). Over 1127 to 1143 (ASVDQVLQIVCVPYQWR) the chain is Lumenal. Residues 1144-1164 (VTMLIIVLVNAFVSITVEESV) traverse the membrane as a helical segment. At 1165 to 1226 (DRWGKCCLPW…NGSCQIITIT (62 aa)) the chain is on the cytoplasmic side.

Belongs to the cation transport ATPase (P-type) (TC 3.A.3) family. Type V subfamily. In terms of tissue distribution, broadly expressed.

The protein localises to the recycling endosome membrane. It is found in the early endosome membrane. It localises to the late endosome membrane. The enzyme catalyses putrescine(out) + ATP + H2O = putrescine(in) + ADP + phosphate + H(+). In terms of biological role, ATP-driven pump involved in endocytosis-dependent polyamine transport. Uses ATP as an energy source to transfer polyamine precursor putrescine from the endosomal compartment to the cytosol. The sequence is that of Polyamine-transporting ATPase 13A3 from Homo sapiens (Human).